The following is a 187-amino-acid chain: CRISPR system Cmr subunit Cmr1-2 (187 aa).

The protein belongs to the CRISPR system Cmr1 family. Part of the type III-B Cmr ribonucleoprotein (RNP) complex. This is an elongated RNP with Cmr2 and Cmr3 as the base, with Cmr4 and Cmr5 forming a helical core along the mature crRNA (39 or 45 nt in length), while the complex is capped by Cmr6 and Cmr1. The 5' end of the crRNA is bound to Cmr2 and Cmr3, while Cmr6 and a Cmr1 subunit (Cmr1-1 or Cmr1-2) cap the 3' end of the crRNA. The target RNA lies antiparallel to the crRNA, with its 5' end near Cmr1 and Cmr6 and its 3' end near Cmr2 and Cmr3; major target cleavage occurs nears the junction of Cmr1/Cmr6 and Cmr4/Cmr, with minor cleavage occurring at 6 nt intervals which coincide with the proposed spacing of Cmr4 subunits.

It is found in the cytoplasm. Its function is as follows. CRISPR (clustered regularly interspaced short palindromic repeat), is an adaptive immune system that provides protection against mobile genetic elements (viruses, transposable elements and conjugative plasmids). CRISPR clusters contain sequences complementary to antecedent mobile elements and target invading nucleic acids. CRISPR clusters are transcribed and processed into CRISPR RNA (crRNA), formerly called psiRNA (prokaryotic silencing) in this organism. Part of the Cmr ribonucleoprotein complex which has divalent cation-dependent endoribonuclease activity specific for ssRNA complementary to the crRNA (target RNA), generating 5' hydroxy- and 3' phosphate or 2'-3' cyclic phosphate termini. Cmr4 is probably the subunit that cleaves target RNA. Cmr complex does not cleave ssDNA complementary to the crRNA. Cleavage of invading RNA is guided by the crRNA; substrate cleavage occurs a fixed distance (14 nt) from the 3' end of the crRNA. In vitro reconstitution shows Cmr1-2 and Cmr5 are not absolutely necessary for target cleavage. The polypeptide is CRISPR system Cmr subunit Cmr1-2 (Pyrococcus furiosus (strain ATCC 43587 / DSM 3638 / JCM 8422 / Vc1)).